Here is a 155-residue protein sequence, read N- to C-terminus: Small ribosomal subunit protein uS7 (155 aa).

The protein belongs to the universal ribosomal protein uS7 family. Part of the 30S ribosomal subunit. Contacts proteins S9 and S11.

One of the primary rRNA binding proteins, it binds directly to 16S rRNA where it nucleates assembly of the head domain of the 30S subunit. Is located at the subunit interface close to the decoding center, probably blocks exit of the E-site tRNA. This is Small ribosomal subunit protein uS7 from Corynebacterium efficiens (strain DSM 44549 / YS-314 / AJ 12310 / JCM 11189 / NBRC 100395).